A 478-amino-acid chain; its full sequence is Cytochrome c-552 (478 aa).

An N-terminal signal peptide occupies residues 1-26; sequence MTRIKINARRIFSLLIPFFFFTSVHA. Residue His94 coordinates heme c. Heme-binding residues include Cys122, Cys125, and Lys126. Heme c is bound by residues Cys160, Cys163, His164, Cys209, Cys212, and His213. 4 residues coordinate Ca(2+): Glu215, Tyr216, Lys261, and Gln263. Residue Tyr216 participates in substrate binding. His264 provides a ligand contact to substrate. His275, Cys282, Cys285, His286, His301, Cys314, Cys317, His318, and His393 together coordinate heme c.

Belongs to the cytochrome c-552 family. Ca(2+) serves as cofactor. Heme c is required as a cofactor.

Its subcellular location is the periplasm. It carries out the reaction 6 Fe(III)-[cytochrome c] + NH4(+) + 2 H2O = 6 Fe(II)-[cytochrome c] + nitrite + 8 H(+). The protein operates within nitrogen metabolism; nitrate reduction (assimilation). Functionally, catalyzes the reduction of nitrite to ammonia, consuming six electrons in the process. The polypeptide is Cytochrome c-552 (Shigella flexneri).